A 534-amino-acid chain; its full sequence is Bifunctional pantoate ligase/cytidylate kinase (534 aa).

The interval 1–302 is pantoate--beta-alanine ligase; that stretch reads MRLLTTVAAL…LGSTRLIDNT (302 aa). An ATP-binding site is contributed by 48 to 55; that stretch reads MGSLHQGH. H55 functions as the Proton donor in the catalytic mechanism. Residue Q79 coordinates (R)-pantoate. Residue Q79 participates in beta-alanine binding. An ATP-binding site is contributed by 172 to 175; it reads GQKD. (R)-pantoate is bound at residue Q178. ATP is bound by residues V201 and 209–212; that span reads CSSR. The tract at residues 303-534 is cytidylate kinase; sequence ILRDRQPIIA…DYYQQRLSQW (232 aa).

It in the N-terminal section; belongs to the pantothenate synthetase family. In the C-terminal section; belongs to the cytidylate kinase family. Type 1 subfamily.

The protein resides in the cytoplasm. The catalysed reaction is (R)-pantoate + beta-alanine + ATP = (R)-pantothenate + AMP + diphosphate + H(+). It catalyses the reaction CMP + ATP = CDP + ADP. The enzyme catalyses dCMP + ATP = dCDP + ADP. It functions in the pathway cofactor biosynthesis; (R)-pantothenate biosynthesis; (R)-pantothenate from (R)-pantoate and beta-alanine: step 1/1. In terms of biological role, catalyzes the condensation of pantoate with beta-alanine in an ATP-dependent reaction via a pantoyl-adenylate intermediate. Its function is as follows. Catalyzes the transfer of a phosphate group from ATP to either CMP or dCMP to form CDP or dCDP and ADP, respectively. The sequence is that of Bifunctional pantoate ligase/cytidylate kinase from Nostoc sp. (strain PCC 7120 / SAG 25.82 / UTEX 2576).